Here is a 937-residue protein sequence, read N- to C-terminus: Protein translocase subunit SecA (937 aa).

Residues Q86, 104-108 (GEGKT), and D493 contribute to the ATP site. A disordered region spans residues 868-889 (LERPSQPTKLAYSAPSEDGDAE). Zn(2+) is bound by residues C911, C913, C922, and H923. Residues 915–937 (SGKKFKQCHGRPGGPTGLTARVS) are disordered.

This sequence belongs to the SecA family. As to quaternary structure, monomer and homodimer. Part of the essential Sec protein translocation apparatus which comprises SecA, SecYEG and auxiliary proteins SecDF. Other proteins may also be involved. Zn(2+) serves as cofactor.

The protein resides in the cell membrane. It is found in the cytoplasm. It carries out the reaction ATP + H2O + cellular proteinSide 1 = ADP + phosphate + cellular proteinSide 2.. In terms of biological role, part of the Sec protein translocase complex. Interacts with the SecYEG preprotein conducting channel. Has a central role in coupling the hydrolysis of ATP to the transfer of proteins into and across the cell membrane, serving as an ATP-driven molecular motor driving the stepwise translocation of polypeptide chains across the membrane. This Nocardioides sp. (strain ATCC BAA-499 / JS614) protein is Protein translocase subunit SecA.